The primary structure comprises 431 residues: Histidinol dehydrogenase (431 aa).

NAD(+) is bound by residues Tyr124, Gln187, and Asn210. Substrate-binding residues include Ser236, Gln258, and His261. Positions 258 and 261 each coordinate Zn(2+). Catalysis depends on proton acceptor residues Glu325 and His326. Substrate contacts are provided by His326, Asp359, Glu413, and His418. Zn(2+) is bound at residue Asp359. Residue His418 coordinates Zn(2+).

The protein belongs to the histidinol dehydrogenase family. Zn(2+) is required as a cofactor.

It catalyses the reaction L-histidinol + 2 NAD(+) + H2O = L-histidine + 2 NADH + 3 H(+). It participates in amino-acid biosynthesis; L-histidine biosynthesis; L-histidine from 5-phospho-alpha-D-ribose 1-diphosphate: step 9/9. In terms of biological role, catalyzes the sequential NAD-dependent oxidations of L-histidinol to L-histidinaldehyde and then to L-histidine. The chain is Histidinol dehydrogenase from Legionella pneumophila (strain Paris).